A 728-amino-acid chain; its full sequence is MEYRYSYVIDPSSYDNQGLCNGIPLRVHRNADIEEYATISLRNDWRKHVGPLPLTSYGGNLGPKYNFTAVTLPECRPDRLEIVSYIMEFAFLHDDLVDTAQVDEALALNDTWRDGITEGLDTTSAKGKKSGEGLILRNILKEVTAIDPVRAAELMKFWKRDLDVSRDRKHFRDFDDYMEYRIVDCASYFLIALSTFAMALTIPAEDKDEVFTLLTRPVWAAAALTNDVQSWEKEDKLFQKDNATDMTNGVWMLMKQYSIGVEEAKRRILGKAREHVAEFVKTLSQIHNRLDLSLDSRLFVEAMQYMISGNLMWGISTPRYHSDQSLDEMMVARMKYGWPNHREVTKLTSDLENRGTKRTHQDDTEGVQSVKRFNGASTKNGINGTNGINGLNGINGSNGVKIKRHKNKEYSGALTKDSDLVLNMDLNGLSSAIICAPADYIGSLPSKGIRDNVADALSIWLDVPAKELNQIKRAINLLHNASLMLDDVQDGSVLRRAQPTTHTVFGPAQTINSAGHQIIQAMNEIRKLGSDDCLDIFSEELEKLYVGQSHDLYWVYNDSCSPTIEDYFKMVDYKTGGLFNMLARLMTAKSSSSSSPDLTALVGLLGRYFQIRDDYMNLTSADYTVEKGFCEDLDEGKFSITLLHALSAAPEPEALLLRNLMSGRRNDGKLSVVQKNLALSIIEGARSLEYTAAVLQKLYKAIVRELESTERQFGENKPFRFLLSLLKV.

A terpene cyclase region spans residues 1 to 327; that stretch reads MEYRYSYVID…PRYHSDQSLD (327 aa). Residues Asp-94 and Asp-98 each contribute to the Mg(2+) site. Substrate-binding positions include Asp-94, Asp-98, 181–184, Asn-226, 230–234, and 319–320; these read RIVD, SWEKE, and RY. Positions 94–98 match the DDXXD 1 motif; it reads DDLVD. The NSE/DTE motif lies at 226–234; sequence NDVQSWEKE. The segment at 328-728 is prenyltransferase; that stretch reads EMMVARMKYG…FRFLLSLLKV (401 aa). The segment covering 352–363 has biased composition (basic and acidic residues); that stretch reads ENRGTKRTHQDD. A disordered region spans residues 352 to 379; that stretch reads ENRGTKRTHQDDTEGVQSVKRFNGASTK. 3 tandem repeats follow at residues 381-386, 387-392, and 393-398. Positions 381-398 are 3 X 6 AA approximate tandem repeats; sequence GINGTNGINGLNGINGSN. Positions 447, 450, and 479 each coordinate isopentenyl diphosphate. Mg(2+) is bound by residues Asp-486 and Asp-490. Positions 486-490 match the DDXXD 2 motif; the sequence is DDVQD. A dimethylallyl diphosphate-binding site is contributed by Arg-495. Residue Arg-496 participates in isopentenyl diphosphate binding. Dimethylallyl diphosphate-binding residues include Lys-574, Thr-575, Gln-610, Asn-617, Lys-627, and Lys-637.

This sequence in the N-terminal section; belongs to the terpene synthase family. It in the C-terminal section; belongs to the FPP/GGPP synthase family. Hexamer. Mg(2+) is required as a cofactor.

The enzyme catalyses isopentenyl diphosphate + (2E,6E)-farnesyl diphosphate = (2E,6E,10E)-geranylgeranyl diphosphate + diphosphate. It participates in secondary metabolite biosynthesis; terpenoid biosynthesis. Bifunctional terpene synthase; part of the gene cluster that mediates the biosynthesis of the diterpene methyl phomopsenonate. At first, the universal precursor of diterpene, geranylgeranyl diphosphate (GGPP) is provided and is cyclized by the unusual bifunctional terpene synthase PaPS to give phomopsene. The C-terminal prenyltransferase domain of PaPS catalyzes formation of GGPP, whereas the N-terminal terpene cyclase domain catalyzes the cyclization of GGPP to phomopsene. Since the oxidation of a methylgroup to a carboxyl group is frequently catalyzed by a cytochrome P450 monooxygenase, the C-16 methyl group would be oxidized by the cluster-specific cytochrome P450 monooxygenase ORF3. Subsequently, oxidation of the allylic position and methylation of the carboxyl group may give methyl phomopsenonate. Although further study is necessary to identify genes such as a monooxygenase and a methyltransferase, the predicted functions of genes on the cluster are correlated with the structure of methyl phomopsenonate. The protein is Phomopsene synthase of Phomopsis amygdali (Fusicoccum amygdali).